The sequence spans 43 residues: Iota-conotoxin-like S11.2 (43 aa).

Cystine bridges form between cysteine 2/cysteine 16, cysteine 9/cysteine 19, cysteine 15/cysteine 24, and cysteine 18/cysteine 35. A D-methionine modification is found at methionine 41. A propeptide (removed by a carboxypeptidase) is located at residue arginine 43.

The protein belongs to the conotoxin I1 superfamily. In terms of tissue distribution, expressed by the venom duct.

It localises to the secreted. In terms of biological role, iota-conotoxins bind to voltage-gated sodium channels (Nav) and act as agonists by shifting the voltage-dependence of activation to more hyperpolarized levels. Produces general excitatory symptoms. The protein is Iota-conotoxin-like S11.2 of Conus striatus (Striated cone).